The primary structure comprises 241 residues: Glucosamine-6-phosphate deaminase (241 aa).

Asp-67 (proton acceptor; for enolization step) is an active-site residue. The active-site For ring-opening step is Asn-136. His-138 serves as the catalytic Proton acceptor; for ring-opening step. Glu-143 acts as the For ring-opening step in catalysis.

It belongs to the glucosamine/galactosamine-6-phosphate isomerase family. NagB subfamily.

The catalysed reaction is alpha-D-glucosamine 6-phosphate + H2O = beta-D-fructose 6-phosphate + NH4(+). Its pathway is amino-sugar metabolism; N-acetylneuraminate degradation; D-fructose 6-phosphate from N-acetylneuraminate: step 5/5. Functionally, catalyzes the reversible isomerization-deamination of glucosamine 6-phosphate (GlcN6P) to form fructose 6-phosphate (Fru6P) and ammonium ion. The sequence is that of Glucosamine-6-phosphate deaminase from Bacillus pumilus (strain SAFR-032).